Here is a 338-residue protein sequence, read N- to C-terminus: Fructose-1,6-bisphosphatase class 1 1 (338 aa).

The Mg(2+) site is built by glutamate 94, aspartate 116, leucine 118, and aspartate 119. Substrate is bound by residues aspartate 119–serine 122, asparagine 210, and lysine 276. Position 282 (glutamate 282) interacts with Mg(2+).

Belongs to the FBPase class 1 family. Homotetramer. Mg(2+) is required as a cofactor.

The protein localises to the cytoplasm. It catalyses the reaction beta-D-fructose 1,6-bisphosphate + H2O = beta-D-fructose 6-phosphate + phosphate. It functions in the pathway carbohydrate biosynthesis; gluconeogenesis. This Paraburkholderia xenovorans (strain LB400) protein is Fructose-1,6-bisphosphatase class 1 1.